Reading from the N-terminus, the 282-residue chain is Bifunctional protein FolD (282 aa).

NADP(+)-binding positions include 166 to 168 and Ser191; that span reads GRS.

The protein belongs to the tetrahydrofolate dehydrogenase/cyclohydrolase family. In terms of assembly, homodimer.

The enzyme catalyses (6R)-5,10-methylene-5,6,7,8-tetrahydrofolate + NADP(+) = (6R)-5,10-methenyltetrahydrofolate + NADPH. It carries out the reaction (6R)-5,10-methenyltetrahydrofolate + H2O = (6R)-10-formyltetrahydrofolate + H(+). It participates in one-carbon metabolism; tetrahydrofolate interconversion. Its function is as follows. Catalyzes the oxidation of 5,10-methylenetetrahydrofolate to 5,10-methenyltetrahydrofolate and then the hydrolysis of 5,10-methenyltetrahydrofolate to 10-formyltetrahydrofolate. In Acidovorax ebreus (strain TPSY) (Diaphorobacter sp. (strain TPSY)), this protein is Bifunctional protein FolD.